A 339-amino-acid polypeptide reads, in one-letter code: Transcription factor IIIA (339 aa).

9 C2H2-type zinc fingers span residues 12 to 36, 42 to 66, 72 to 97, 104 to 128, 134 to 158, 161 to 187, 190 to 212, 219 to 244, and 250 to 274; these read FICS…LCKH, FPCT…VLSH, CKCE…KRAH, YVCY…QYIH, FKCS…EKTH, YPCR…AELH, VTCS…KKIH, YRCP…LTFH, and FVCE…FNTH. Positions 271–339 are disordered; that stretch reads FNTHDPEKKK…LPVLENLTLK (69 aa). Residues 299-309 are compositionally biased toward basic residues; the sequence is KPKKSKKKKKP. Over residues 311–323 the composition is skewed to polar residues; sequence QTPAMESQEQQPD.

The protein resides in the nucleus. In terms of biological role, involved in ribosomal large subunit biogenesis. Interacts with the internal control region (ICR) of approximately 50 bases within the 5S RNA genes, is required for correct transcription of these genes by RNA polymerase III. Also binds the transcribed 5S RNA's. This Anaxyrus americanus (American toad) protein is Transcription factor IIIA (gtf3a).